The following is a 378-amino-acid chain: Lipid-A-disaccharide synthase (378 aa).

The protein belongs to the LpxB family.

It catalyses the reaction a lipid X + a UDP-2-N,3-O-bis[(3R)-3-hydroxyacyl]-alpha-D-glucosamine = a lipid A disaccharide + UDP + H(+). Its pathway is bacterial outer membrane biogenesis; LPS lipid A biosynthesis. In terms of biological role, condensation of UDP-2,3-diacylglucosamine and 2,3-diacylglucosamine-1-phosphate to form lipid A disaccharide, a precursor of lipid A, a phosphorylated glycolipid that anchors the lipopolysaccharide to the outer membrane of the cell. The sequence is that of Lipid-A-disaccharide synthase from Pseudomonas aeruginosa (strain UCBPP-PA14).